The chain runs to 336 residues: Tryptophan--tRNA ligase (336 aa).

ATP-binding positions include 16–18 (QPT) and 24–25 (GN). The 'HIGH' region motif lies at 17-25 (PTGQLHLGN). Position 140 (D140) interacts with L-tryptophan. Residues 152 to 154 (GED), V191, and 200 to 204 (KMSKS) contribute to the ATP site. The 'KMSKS' region signature appears at 200–204 (KMSKS).

This sequence belongs to the class-I aminoacyl-tRNA synthetase family. Homodimer.

Its subcellular location is the cytoplasm. It carries out the reaction tRNA(Trp) + L-tryptophan + ATP = L-tryptophyl-tRNA(Trp) + AMP + diphosphate + H(+). Functionally, catalyzes the attachment of tryptophan to tRNA(Trp). This chain is Tryptophan--tRNA ligase, found in Gloeobacter violaceus (strain ATCC 29082 / PCC 7421).